Here is a 316-residue protein sequence, read N- to C-terminus: Olfactory receptor 12D3 (316 aa).

Over Met1–Pro23 the chain is Extracellular. Residue Asn3 is glycosylated (N-linked (GlcNAc...) asparagine). A helical membrane pass occupies residues Phe24 to Leu44. The Cytoplasmic segment spans residues Val45–Gln52. Residues Leu53–Ser73 form a helical membrane-spanning segment. At Val74 to Thr97 the chain is on the extracellular side. Cys95 and Cys187 form a disulfide bridge. Residues Gln98–Phe118 traverse the membrane as a helical segment. The Cytoplasmic segment spans residues Asp119–Gln137. The helical transmembrane segment at Val138–Ser158 threads the bilayer. The Extracellular portion of the chain corresponds to Val159–Trp195. Residues Leu196 to Ser215 form a helical membrane-spanning segment. Residues Cys216–Ala236 are Cytoplasmic-facing. A helical transmembrane segment spans residues Leu237 to Thr257. Over Tyr258 to Asp270 the chain is Extracellular. Residues Arg271 to Leu291 traverse the membrane as a helical segment. Topologically, residues Arg292–His316 are cytoplasmic.

This sequence belongs to the G-protein coupled receptor 1 family.

The protein resides in the cell membrane. Functionally, odorant receptor. The protein is Olfactory receptor 12D3 (OR12D3) of Homo sapiens (Human).